A 284-amino-acid polypeptide reads, in one-letter code: Pantothenate synthetase (284 aa).

M30 to H37 is a binding site for ATP. The active-site Proton donor is the H37. Q61 serves as a coordination point for (R)-pantoate. Residue Q61 coordinates beta-alanine. G147 to D150 contacts ATP. Q153 provides a ligand contact to (R)-pantoate. ATP is bound by residues V176 and T184–R187.

This sequence belongs to the pantothenate synthetase family. In terms of assembly, homodimer.

Its subcellular location is the cytoplasm. It carries out the reaction (R)-pantoate + beta-alanine + ATP = (R)-pantothenate + AMP + diphosphate + H(+). It participates in cofactor biosynthesis; (R)-pantothenate biosynthesis; (R)-pantothenate from (R)-pantoate and beta-alanine: step 1/1. Its function is as follows. Catalyzes the condensation of pantoate with beta-alanine in an ATP-dependent reaction via a pantoyl-adenylate intermediate. In Chlorobaculum tepidum (strain ATCC 49652 / DSM 12025 / NBRC 103806 / TLS) (Chlorobium tepidum), this protein is Pantothenate synthetase.